The sequence spans 352 residues: Peptide chain release factor 1 (352 aa).

An N5-methylglutamine modification is found at glutamine 233. The interval 288 to 309 is disordered; that stretch reads NAKDRKEQVGSGDRSERIRTYN. The segment covering 289–306 has biased composition (basic and acidic residues); that stretch reads AKDRKEQVGSGDRSERIR.

The protein belongs to the prokaryotic/mitochondrial release factor family. Methylated by PrmC. Methylation increases the termination efficiency of RF1.

It localises to the cytoplasm. Functionally, peptide chain release factor 1 directs the termination of translation in response to the peptide chain termination codons UAG and UAA. The protein is Peptide chain release factor 1 of Helicobacter acinonychis (strain Sheeba).